The chain runs to 537 residues: Phosphoenolpyruvate carboxykinase (ATP) (537 aa).

Substrate is bound by residues Arg61, Tyr195, and Lys201. Residues Lys201, His220, and 236–244 (GLSGTGKTT) each bind ATP. Mn(2+) contacts are provided by Lys201 and His220. Position 257 (Asp257) interacts with Mn(2+). ATP contacts are provided by Glu285, Arg323, and Thr448. Arg323 contributes to the substrate binding site.

It belongs to the phosphoenolpyruvate carboxykinase (ATP) family. Mn(2+) is required as a cofactor.

Its subcellular location is the cytoplasm. It catalyses the reaction oxaloacetate + ATP = phosphoenolpyruvate + ADP + CO2. It functions in the pathway carbohydrate biosynthesis; gluconeogenesis. Its function is as follows. Involved in the gluconeogenesis. Catalyzes the conversion of oxaloacetate (OAA) to phosphoenolpyruvate (PEP) through direct phosphoryl transfer between the nucleoside triphosphate and OAA. In Rhodopseudomonas palustris (strain HaA2), this protein is Phosphoenolpyruvate carboxykinase (ATP).